The following is a 270-amino-acid chain: Aliphatic sulfonates import ATP-binding protein SsuB (270 aa).

In terms of domain architecture, ABC transporter spans 17–238; sequence LAANDLRRTF…VRGSHRLAAL (222 aa). Position 49 to 56 (49 to 56) interacts with ATP; sequence GRSGCGKS. The tract at residues 250–270 is disordered; sequence PGTPPEPEPVAPLPTHLRWAH. Residues 251–261 show a composition bias toward pro residues; that stretch reads GTPPEPEPVAP.

Belongs to the ABC transporter superfamily. Aliphatic sulfonates importer (TC 3.A.1.17.2) family. In terms of assembly, the complex is composed of two ATP-binding proteins (SsuB), two transmembrane proteins (SsuC) and a solute-binding protein (SsuA).

The protein localises to the cell inner membrane. It carries out the reaction ATP + H2O + aliphatic sulfonate-[sulfonate-binding protein]Side 1 = ADP + phosphate + aliphatic sulfonateSide 2 + [sulfonate-binding protein]Side 1.. Part of the ABC transporter complex SsuABC involved in aliphatic sulfonates import. Responsible for energy coupling to the transport system. The polypeptide is Aliphatic sulfonates import ATP-binding protein SsuB (Pseudomonas entomophila (strain L48)).